We begin with the raw amino-acid sequence, 335 residues long: 2,4-dienoyl-CoA reductase [(3E)-enoyl-CoA-producing], mitochondrial (335 aa).

The transit peptide at 1–34 (MALLGRAFFAGVSRLPCDPGPQRFFSFGTKTLYQ) directs the protein to the mitochondrion. An N6-acetyllysine; alternate mark is found at Lys-42 and Lys-49. Lys-42 and Lys-49 each carry N6-succinyllysine; alternate. 66-71 (GGGTGL) lines the NADP(+) pocket. Thr-69 bears the Phosphothreonine mark. Lys-73 bears the N6-succinyllysine mark. Arg-91 is an NADP(+) binding site. Arg-91 contacts substrate. N6-acetyllysine; alternate is present on residues Lys-97 and Lys-106. Lys-97 and Lys-106 each carry N6-succinyllysine; alternate. Asp-117 serves as a coordination point for NADP(+). Substrate-binding residues include Arg-119 and Phe-149. The active-site Proton acceptor is Tyr-199. NADP(+) contacts are provided by residues Lys-214 and 240-243 (PGPI). Lys-244 is modified (N6-acetyllysine; alternate). Position 244 is an N6-succinyllysine; alternate (Lys-244). Arg-251 contributes to the substrate binding site. Lys-260 is modified (N6-acetyllysine; alternate). Lys-260 bears the N6-succinyllysine; alternate mark. Position 315 is an N6-acetyllysine (Lys-315). Lys-319 is modified (N6-acetyllysine; alternate). Position 319 is an N6-succinyllysine; alternate (Lys-319).

This sequence belongs to the short-chain dehydrogenases/reductases (SDR) family. 2,4-dienoyl-CoA reductase subfamily. In terms of assembly, homotetramer.

It localises to the mitochondrion. It carries out the reaction a (2E,4E)-dienoyl-CoA + NADPH + H(+) = a 4,5-saturated-(3E)-enoyl-CoA + NADP(+). It catalyses the reaction a (2E,4Z)-dienoyl-CoA + NADPH + H(+) = a 4,5-saturated-(3E)-enoyl-CoA + NADP(+). The enzyme catalyses (2E,4E)-hexadienoyl-CoA + NADPH + H(+) = (3E)-hexenoyl-CoA + NADP(+). Auxiliary enzyme of beta-oxidation. It participates in the metabolism of unsaturated fatty enoyl-CoA esters having double bonds in both even- and odd-numbered positions in mitochondria. Catalyzes the NADP-dependent reduction of 2,4-dienoyl-CoA to yield trans-3-enoyl-CoA. This Mus musculus (Mouse) protein is 2,4-dienoyl-CoA reductase [(3E)-enoyl-CoA-producing], mitochondrial (Decr1).